A 154-amino-acid chain; its full sequence is UPF0178 protein GDI0551/Gdia_1457 (154 aa).

This sequence belongs to the UPF0178 family.

The chain is UPF0178 protein GDI0551/Gdia_1457 from Gluconacetobacter diazotrophicus (strain ATCC 49037 / DSM 5601 / CCUG 37298 / CIP 103539 / LMG 7603 / PAl5).